The chain runs to 392 residues: Galactokinase (392 aa).

Residue 40 to 43 (EHID) participates in substrate binding. Residues Ser-74 and 128–134 (GSGLSSS) each bind ATP. Residues Ser-134 and Glu-167 each coordinate Mg(2+). The active-site Proton acceptor is the Asp-179. Tyr-229 contributes to the substrate binding site.

It belongs to the GHMP kinase family. GalK subfamily.

The protein localises to the cytoplasm. It catalyses the reaction alpha-D-galactose + ATP = alpha-D-galactose 1-phosphate + ADP + H(+). It functions in the pathway carbohydrate metabolism; galactose metabolism. Its function is as follows. Catalyzes the transfer of the gamma-phosphate of ATP to D-galactose to form alpha-D-galactose-1-phosphate (Gal-1-P). The sequence is that of Galactokinase from Clostridium tetani (strain Massachusetts / E88).